A 447-amino-acid polypeptide reads, in one-letter code: Argininosuccinate synthase (447 aa).

ATP is bound by residues 17–25 (AFSGGLDTS) and A43. Y99 contacts L-citrulline. 2 residues coordinate ATP: G129 and T131. L-aspartate is bound by residues T131, N135, and D136. An L-citrulline-binding site is contributed by N135. D136 contributes to the ATP binding site. R139 and S192 together coordinate L-citrulline. Position 194 (D194) interacts with ATP. T201, E203, and E280 together coordinate L-citrulline.

It belongs to the argininosuccinate synthase family. Type 2 subfamily. As to quaternary structure, homotetramer.

Its subcellular location is the cytoplasm. It catalyses the reaction L-citrulline + L-aspartate + ATP = 2-(N(omega)-L-arginino)succinate + AMP + diphosphate + H(+). It functions in the pathway amino-acid biosynthesis; L-arginine biosynthesis; L-arginine from L-ornithine and carbamoyl phosphate: step 2/3. The polypeptide is Argininosuccinate synthase (Janthinobacterium sp. (strain Marseille) (Minibacterium massiliensis)).